We begin with the raw amino-acid sequence, 484 residues long: Aldehyde dehydrogenase family 3 member A2 (484 aa).

Residues 1-463 are Cytoplasmic-facing; it reads MERQVLRLRQ…FLLKQFNKGR (463 aa). Residue 185-190 coordinates NAD(+); it reads GNTAVG. Active-site residues include E207 and C241. The residue at position 293 (S293) is a Phosphoserine. Residues 464–484 form a helical membrane-spanning segment; sequence LGMLLFVCLVAVAAVIVKDQL. The short motif at 481 to 484 is the Prevents secretion from ER element; the sequence is KDQL.

The protein belongs to the aldehyde dehydrogenase family. As to quaternary structure, homodimer.

The protein localises to the membrane. It is found in the microsome membrane. The protein resides in the endoplasmic reticulum membrane. It catalyses the reaction an aldehyde + NAD(+) + H2O = a carboxylate + NADH + 2 H(+). It carries out the reaction a fatty aldehyde + NAD(+) + H2O = a fatty acid + NADH + 2 H(+). The enzyme catalyses hexadecanoate + NADH + 2 H(+) = hexadecanal + NAD(+) + H2O. The catalysed reaction is octanal + NAD(+) + H2O = octanoate + NADH + 2 H(+). It catalyses the reaction (2E)-hexadecenal + NAD(+) + H2O = (E)-hexadec-2-enoate + NADH + 2 H(+). It carries out the reaction 22-oxodocosanoate + NAD(+) + H2O = docosanedioate + NADH + 2 H(+). The enzyme catalyses 2,6,10,14-tetramethylpentadecanal + NAD(+) + H2O = 2,6,10,14-tetramethylpentadecanoate + NADH + 2 H(+). The catalysed reaction is octadecanal + NAD(+) + H2O = octadecanoate + NADH + 2 H(+). It catalyses the reaction dodecanoate + NADH + 2 H(+) = dodecanal + NAD(+) + H2O. It carries out the reaction decanal + NAD(+) + H2O = decanoate + NADH + 2 H(+). The enzyme catalyses tetradecanal + NAD(+) + H2O = tetradecanoate + NADH + 2 H(+). The catalysed reaction is heptanal + NAD(+) + H2O = heptanoate + NADH + 2 H(+). It catalyses the reaction (2E,6E)-farnesal + NAD(+) + H2O = (2E,6E)-farnesoate + NADH + 2 H(+). Functionally, catalyzes the oxidation of medium and long-chain aliphatic aldehydes to fatty acids. Active on a variety of saturated and unsaturated aliphatic aldehydes between 6 and 24 carbons in length. Responsible for conversion of the sphingosine 1-phosphate (S1P) degradation product hexadecenal to hexadecenoic acid. This Mus musculus (Mouse) protein is Aldehyde dehydrogenase family 3 member A2 (Aldh3a2).